Here is an 89-residue protein sequence, read N- to C-terminus: Small ribosomal subunit protein uS15 (89 aa).

Belongs to the universal ribosomal protein uS15 family. As to quaternary structure, part of the 30S ribosomal subunit. Forms a bridge to the 50S subunit in the 70S ribosome, contacting the 23S rRNA.

One of the primary rRNA binding proteins, it binds directly to 16S rRNA where it helps nucleate assembly of the platform of the 30S subunit by binding and bridging several RNA helices of the 16S rRNA. Functionally, forms an intersubunit bridge (bridge B4) with the 23S rRNA of the 50S subunit in the ribosome. The protein is Small ribosomal subunit protein uS15 of Rhizobium meliloti (strain 1021) (Ensifer meliloti).